Here is an 837-residue protein sequence, read N- to C-terminus: Dapper homolog 2 (837 aa).

Residues 65–113 (ENVSKEELRLEATLSLLKQQLTRLRRQDVGLKTHLQQLDQQITELKLDV) adopt a coiled-coil conformation. Disordered stretches follow at residues 189-265 (ADES…PKYQ), 424-497 (HGKH…DKSS), 512-564 (GSQR…KQSG), 600-649 (QQIP…HTQR), and 738-782 (EMSD…EDEG). Polar residues-rich tracts occupy residues 246–265 (VKSS…PKYQ) and 432–445 (LDLQ…NNTA). Basic and acidic residues-rich tracts occupy residues 456-466 (ASEKRSGHFPK), 486-496 (EGSRASCHDKS), and 548-560 (LSRE…RTDL). A compositionally biased stretch (polar residues) spans 741–759 (DYTTNRFGDSESSQGSQTA). The segment covering 768 to 782 (LDEEDLLEEEEEDEG) has biased composition (acidic residues). A PDZ-binding motif is present at residues 834 to 837 (MTLV).

Belongs to the dapper family. In terms of assembly, interacts with dvl2.

It localises to the cytoplasm. The protein localises to the late endosome. It is found in the nucleus. Its subcellular location is the cell membrane. Involved in regulation of intracellular signaling pathways during development. Specifically thought to play a role in canonical and/or non-canonical Wnt signaling pathways through interaction with DSH (Dishevelled) family proteins. Positive regulator of the Wnt signaling pathway which acts downstream of wnt1 indicative for non-canonical Wnt signaling. Also negatively regulates the Nodal signaling pathway, possibly by promoting the lysosomal degradation of Nodal receptors. Required for convergent extension movements in gastrulation. In Danio rerio (Zebrafish), this protein is Dapper homolog 2 (dact2).